The primary structure comprises 116 residues: Putative pterin-4-alpha-carbinolamine dehydratase (116 aa).

Belongs to the pterin-4-alpha-carbinolamine dehydratase family.

It carries out the reaction (4aS,6R)-4a-hydroxy-L-erythro-5,6,7,8-tetrahydrobiopterin = (6R)-L-erythro-6,7-dihydrobiopterin + H2O. The sequence is that of Putative pterin-4-alpha-carbinolamine dehydratase from Stenotrophomonas maltophilia (strain K279a).